Reading from the N-terminus, the 970-residue chain is Sodium/calcium exchanger 1 (970 aa).

Residues 1-32 (MLRLSLPPNVSMGFRLVALVALLFSHVDHITA) form the signal peptide. Over 33 to 71 (DTEAETGGNETTECTGSYYCKKGVILPIWEPQDPSFGDK) the chain is Extracellular. N-linked (GlcNAc...) asparagine glycosylation occurs at N41. A helical membrane pass occupies residues 72–92 (IARATVYFVAMVYMFLGVSII). Topologically, residues 93 to 133 (ADRFMSSIEVITSQEKEITIKKPNGETTKTTVRIWNETVSN) are cytoplasmic. Residues 134-154 (LTLMALGSSAPEILLSVIEVC) traverse the membrane as a helical segment. The stretch at 138–178 (ALGSSAPEILLSVIEVCGHNFTAGDLGPSTIVGSAAFNMFI) is one Alpha-1 repeat. The Extracellular portion of the chain corresponds to 155–167 (GHNFTAGDLGPST). The N-linked (GlcNAc...) asparagine glycan is linked to N157. The helical transmembrane segment at 168 to 188 (IVGSAAFNMFIIIALCVYVVP) threads the bilayer. Over 189–201 (DGETRKIKHLRVF) the chain is Cytoplasmic. A helical membrane pass occupies residues 202–222 (FVTAAWSIFAYTWLYIILSVS). At 223–228 (SPGVVE) the chain is on the extracellular side. A helical transmembrane segment spans residues 229–249 (VWEGLLTFFFFPICVVFAWVA). The Cytoplasmic segment spans residues 250-797 (DRRLLFYKYV…FVPPTEYWNG (548 aa)). The segment at 251–270 (RRLLFYKYVYKRYRAGKQRG) is putative calmodulin-binding region. Phosphoserine occurs at positions 282 and 389. 2 consecutive Calx-beta domains span residues 393 to 493 (VNME…VHLS) and 524 to 624 (ATIT…IEIG). The Ca(2+) site is built by E417, D453, D478, D479, I481, E483, E486, D530, D531, D532, E548, D584, D610, E611, E612, and E715. Residues 798–818 (WACFIVSILMIGLLTAFIGDL) form a helical membrane-spanning segment. Over 819–821 (ASH) the chain is Extracellular. The helical transmembrane segment at 822 to 842 (FGCTIGLKDSVTAVVFVALGT) threads the bilayer. The Alpha-2 repeat unit spans residues 839–875 (ALGTSVPDTFASKVAATQDQYADASIGNVTGSNAVNV). Residues 843 to 871 (SVPDTFASKVAATQDQYADASIGNVTGSN) lie on the Cytoplasmic side of the membrane. Residues 872–892 (AVNVFLGIGVAWSIAAIYHAA) form a helical membrane-spanning segment. The Extracellular portion of the chain corresponds to 893–903 (NGEQFKVSPGT). Residues 904 to 924 (LAFSVTLFTIFAFINVGVLLY) form a helical membrane-spanning segment. Residues 925–941 (RRRPEIGGELGGPRTAK) lie on the Cytoplasmic side of the membrane. The chain crosses the membrane as a helical span at residues 942–962 (LLTSSLFVLLWLLYIFFSSLE). Residues 963 to 970 (AYCHIKGF) are Extracellular-facing.

This sequence belongs to the Ca(2+):cation antiporter (CaCA) (TC 2.A.19) family. SLC8 subfamily. In terms of tissue distribution, detected in heart, kidney and brain (at protein level).

It localises to the cell membrane. It catalyses the reaction Ca(2+)(in) + 3 Na(+)(out) = Ca(2+)(out) + 3 Na(+)(in). Activated by micromolar levels of Ca(2+). Mediates the exchange of one Ca(2+) ion against three to four Na(+) ions across the cell membrane, and thereby contributes to the regulation of cytoplasmic Ca(2+) levels and Ca(2+)-dependent cellular processes. Contributes to Ca(2+) transport during excitation-contraction coupling in muscle. In a first phase, voltage-gated channels mediate the rapid increase of cytoplasmic Ca(2+) levels due to release of Ca(2+) stores from the endoplasmic reticulum. SLC8A1 mediates the export of Ca(2+) from the cell during the next phase, so that cytoplasmic Ca(2+) levels rapidly return to baseline. Required for normal embryonic heart development and the onset of heart contractions. This is Sodium/calcium exchanger 1 (Slc8a1) from Mus musculus (Mouse).